A 255-amino-acid polypeptide reads, in one-letter code: Reticulon-like protein B3 (255 aa).

The span at 1–25 (MAEEHKHEESIMEKISEKIHGHDDS) shows a compositional bias: basic and acidic residues. Positions 1-38 (MAEEHKHEESIMEKISEKIHGHDDSSSSSSDSDDDKNS) are disordered. Ala-2 carries the post-translational modification N-acetylalanine. The Reticulon domain maps to 64-255 (PADIFLWRNK…GAFAFIKKKD (192 aa)). 3 helical membrane passes run 75 to 95 (VSGGVLGAATVSWILFELLEY), 97 to 117 (LLTLFGHISILALAVLFLWSS), and 186 to 206 (CNFLTLIYIATVLLFTIPVLY).

The protein localises to the endoplasmic reticulum membrane. The protein resides in the vacuole membrane. This chain is Reticulon-like protein B3 (RTNLB3), found in Arabidopsis thaliana (Mouse-ear cress).